We begin with the raw amino-acid sequence, 279 residues long: Energy-coupling factor transporter ATP-binding protein EcfA1 (279 aa).

The ABC transporter domain occupies 5-240; the sequence is IELKKVTFNY…GDELLQLGLD (236 aa). 40–47 lines the ATP pocket; the sequence is GHNGSGKS.

It belongs to the ABC transporter superfamily. Energy-coupling factor EcfA family. In terms of assembly, forms a stable energy-coupling factor (ECF) transporter complex composed of 2 membrane-embedded substrate-binding proteins (S component), 2 ATP-binding proteins (A component) and 2 transmembrane proteins (T component).

Its subcellular location is the cell membrane. Its function is as follows. ATP-binding (A) component of a common energy-coupling factor (ECF) ABC-transporter complex. Unlike classic ABC transporters this ECF transporter provides the energy necessary to transport a number of different substrates. This is Energy-coupling factor transporter ATP-binding protein EcfA1 from Streptococcus pyogenes serotype M12 (strain MGAS2096).